Consider the following 554-residue polypeptide: CTP synthase (554 aa).

The segment at 1–265 (MTPLIFVTGG…DELVIDQFKL (265 aa)) is amidoligase domain. Serine 13 provides a ligand contact to CTP. Serine 13 contributes to the UTP binding site. Residues 14–19 (SLGKGI) and aspartate 71 contribute to the ATP site. The Mg(2+) site is built by aspartate 71 and glutamate 139. Residues 146–148 (DIE), 186–191 (KTKPTQ), and lysine 222 contribute to the CTP site. UTP is bound by residues 186 to 191 (KTKPTQ) and lysine 222. The Glutamine amidotransferase type-1 domain occupies 292–545 (TIAVVGKYVD…VRAAREKKAG (254 aa)). Glycine 353 is an L-glutamine binding site. Residue cysteine 380 is the Nucleophile; for glutamine hydrolysis of the active site. L-glutamine is bound by residues 381 to 384 (YGMQ), glutamate 404, and arginine 471. Catalysis depends on residues histidine 518 and glutamate 520.

Belongs to the CTP synthase family. In terms of assembly, homotetramer.

It catalyses the reaction UTP + L-glutamine + ATP + H2O = CTP + L-glutamate + ADP + phosphate + 2 H(+). The enzyme catalyses L-glutamine + H2O = L-glutamate + NH4(+). It carries out the reaction UTP + NH4(+) + ATP = CTP + ADP + phosphate + 2 H(+). The protein operates within pyrimidine metabolism; CTP biosynthesis via de novo pathway; CTP from UDP: step 2/2. Allosterically activated by GTP, when glutamine is the substrate; GTP has no effect on the reaction when ammonia is the substrate. The allosteric effector GTP functions by stabilizing the protein conformation that binds the tetrahedral intermediate(s) formed during glutamine hydrolysis. Inhibited by the product CTP, via allosteric rather than competitive inhibition. Catalyzes the ATP-dependent amination of UTP to CTP with either L-glutamine or ammonia as the source of nitrogen. Regulates intracellular CTP levels through interactions with the four ribonucleotide triphosphates. The chain is CTP synthase from Xanthomonas campestris pv. campestris (strain 8004).